The primary structure comprises 414 residues: DNA polymerase IV 1 (414 aa).

In terms of domain architecture, UmuC spans 8–189; the sequence is IFHIDMNSFY…LPVGEMHGVG (182 aa). Asp12 and Asp108 together coordinate Mg(2+). The active site involves Glu109. A disordered region spans residues 391–414; sequence LKKEESKTKGTSFNKDFFQDEKKS.

Belongs to the DNA polymerase type-Y family. Monomer. It depends on Mg(2+) as a cofactor.

The protein resides in the cytoplasm. The catalysed reaction is DNA(n) + a 2'-deoxyribonucleoside 5'-triphosphate = DNA(n+1) + diphosphate. Functionally, poorly processive, error-prone DNA polymerase involved in untargeted mutagenesis. Copies undamaged DNA at stalled replication forks, which arise in vivo from mismatched or misaligned primer ends. These misaligned primers can be extended by PolIV. Exhibits no 3'-5' exonuclease (proofreading) activity. May be involved in translesion synthesis (TSL), in conjunction with the beta clamp from PolIII. This is DNA polymerase IV 1 (dinB1) from Bacillus subtilis (strain 168).